Consider the following 154-residue polypeptide: Low molecular weight protein-tyrosine-phosphatase PtpA (154 aa).

Cys8 serves as the catalytic Nucleophile. Residue Arg14 is part of the active site. Asp120 serves as the catalytic Proton donor.

The protein belongs to the low molecular weight phosphotyrosine protein phosphatase family.

The enzyme catalyses O-phospho-L-tyrosyl-[protein] + H2O = L-tyrosyl-[protein] + phosphate. In terms of biological role, dephosphorylates the phosphotyrosine-containing proteins. The polypeptide is Low molecular weight protein-tyrosine-phosphatase PtpA (ptpA) (Staphylococcus epidermidis (strain ATCC 35984 / DSM 28319 / BCRC 17069 / CCUG 31568 / BM 3577 / RP62A)).